Consider the following 81-residue polypeptide: MALNIKDPSVHQAVKQIAKITGESQARAVATAVNERLARLRSDDLAARLLAIGHKTASRMSPEAKRLDHDALLYDERGLPA.

Functionally, antitoxin component of a type II toxin-antitoxin (TA) system. In Mycobacterium tuberculosis (strain CDC 1551 / Oshkosh), this protein is Antitoxin VapB28 (vapB28).